A 289-amino-acid chain; its full sequence is Probable endonuclease 4 (289 aa).

Zn(2+) contacts are provided by His74, His115, Glu150, Asp184, His187, His218, Asp231, His233, and Glu263.

Belongs to the AP endonuclease 2 family. The cofactor is Zn(2+).

The enzyme catalyses Endonucleolytic cleavage to 5'-phosphooligonucleotide end-products.. In terms of biological role, endonuclease IV plays a role in DNA repair. It cleaves phosphodiester bonds at apurinic or apyrimidinic (AP) sites, generating a 3'-hydroxyl group and a 5'-terminal sugar phosphate. In Mycoplasma mycoides subsp. mycoides SC (strain CCUG 32753 / NCTC 10114 / PG1), this protein is Probable endonuclease 4.